The primary structure comprises 118 residues: Probable non-functional immunoglobulin lambda variable 2-33 (118 aa).

Residues 1–19 (MAWALLLLTLLTQGTGSWA) form the signal peptide. The tract at residues 20–44 (QSALTQPPFVSGAPGQSVTISCTGT) is framework-1. Positions 34–118 (GQSVTISCTG…CSLYSSSYTF (85 aa)) constitute an Ig-like domain. Residues Cys41 and Cys109 are joined by a disulfide bond. The tract at residues 45–53 (SSDVGDYDH) is complementarity-determining-1. The tract at residues 54–70 (VFWYQKRLSTTSRLLIY) is framework-2. Positions 71–73 (NVN) are complementarity-determining-2. The tract at residues 74–109 (TRPSGISDLFSGSKSGNMASLTISGLKSEVEANYHC) is framework-3. A complementarity-determining-3 region spans residues 110–118 (SLYSSSYTF).

Immunoglobulins are composed of two identical heavy chains and two identical light chains; disulfide-linked.

The protein resides in the secreted. The protein localises to the cell membrane. Functionally, probable non-functional open reading frame (ORF) of V region of the variable domain of immunoglobulin light chains. Non-functional ORF generally cannot participate in the synthesis of a productive immunoglobulin chain due to altered V-(D)-J or switch recombination and/or splicing site (at mRNA level) and/or conserved amino acid change (protein level). Immunoglobulins, also known as antibodies, are membrane-bound or secreted glycoproteins produced by B lymphocytes. In the recognition phase of humoral immunity, the membrane-bound immunoglobulins serve as receptors which, upon binding of a specific antigen, trigger the clonal expansion and differentiation of B lymphocytes into immunoglobulins-secreting plasma cells. Secreted immunoglobulins mediate the effector phase of humoral immunity, which results in the elimination of bound antigens. The antigen binding site is formed by the variable domain of one heavy chain, together with that of its associated light chain. Thus, each immunoglobulin has two antigen binding sites with remarkable affinity for a particular antigen. The variable domains are assembled by a process called V-(D)-J rearrangement and can then be subjected to somatic hypermutations which, after exposure to antigen and selection, allow affinity maturation for a particular antigen. This Homo sapiens (Human) protein is Probable non-functional immunoglobulin lambda variable 2-33.